We begin with the raw amino-acid sequence, 106 residues long: UPF0145 protein PSEEN3024 (106 aa).

It belongs to the UPF0145 family.

The sequence is that of UPF0145 protein PSEEN3024 from Pseudomonas entomophila (strain L48).